The primary structure comprises 224 residues: ATP-dependent dethiobiotin synthetase BioD (224 aa).

13-18 (NVGKTI) provides a ligand contact to ATP. Residue Thr17 participates in Mg(2+) binding. Lys38 is an active-site residue. A substrate-binding site is contributed by Ser42. ATP-binding positions include Asp55, 116-119 (EGAG), 176-177 (NN), and Asn211. Mg(2+) is bound by residues Asp55 and Glu116.

This sequence belongs to the dethiobiotin synthetase family. In terms of assembly, homodimer. Requires Mg(2+) as cofactor.

It is found in the cytoplasm. It catalyses the reaction (7R,8S)-7,8-diammoniononanoate + CO2 + ATP = (4R,5S)-dethiobiotin + ADP + phosphate + 3 H(+). It participates in cofactor biosynthesis; biotin biosynthesis; biotin from 7,8-diaminononanoate: step 1/2. Catalyzes a mechanistically unusual reaction, the ATP-dependent insertion of CO2 between the N7 and N8 nitrogen atoms of 7,8-diaminopelargonic acid (DAPA, also called 7,8-diammoniononanoate) to form a ureido ring. The sequence is that of ATP-dependent dethiobiotin synthetase BioD from Buchnera aphidicola subsp. Acyrthosiphon pisum (strain 5A).